A 170-amino-acid polypeptide reads, in one-letter code: MQRGALRGASPTARRRLVDRPGLTEDEIEEIREAFNLFDTDGSGMIDPKELKAAMQSLGFETKNPTIYQMIADLDRDSGGPIDFEEFLDAITAKLGDKESREGIQKIFSLFDDDRTGTITLKNLKRVAKELGETMSEDELREMLERADSNGDGEISFEDFYAIMTKKTFP.

The disordered stretch occupies residues Met1 to Pro21. 4 consecutive EF-hand domains span residues Asp26 to Glu61, Thr62 to Asp97, Glu99 to Thr134, and Met135 to Pro170. Ca(2+)-binding residues include Asp39, Asp41, Ser43, Met45, and Glu50.

It belongs to the centrin family. In terms of assembly, monomer. Does not homooligomerize.

The protein resides in the cytoplasm. The protein localises to the cytoskeleton. Its subcellular location is the microtubule organizing center. It localises to the centrosome. In tachyzoites, plays an essential role in microneme secretion that ensures parasite motility and attachment to, invasion of and egress from host cells. Also involved in the architecture of the peripheral annuli where it appears to regulate the localization of PAP2. In association with the myosin motor MyoJ, involved in the constriction of the basal complex at the end of daughter cell division in an actin-dependent manner; the basal complex is a cytoskeletal structure formed at the tachyzoite basal pole during daughter cell formation. May be involved in parasite replication. The polypeptide is Centrin-2 (Toxoplasma gondii (strain ATCC 50611 / Me49)).